Reading from the N-terminus, the 183-residue chain is MARRGQQPPPQQQQAPPTQKNQAGKFNPAEFVKPGLTEEEVLEIKEAFDLFDTDGTQSIDPKELKAAMTSLGFEAKNQTIYQMISDLDTDGSGQIDFAEFLKLMTARISERDSKADIQKVFNLFDSERAGVITLKDLRKVAKELGETMDDSELQEMIDRADSDGDAQVTFEDFYNIMTKKTFA.

Residues 1–30 (MARRGQQPPPQQQQAPPTQKNQAGKFNPAE) form a disordered region. EF-hand domains are found at residues 39–74 (EEVLEIKEAFDLFDTDGTQSIDPKELKAAMTSLGFE), 75–110 (AKNQTIYQMISDLDTDGSGQIDFAEFLKLMTARISE), 112–147 (DSKADIQKVFNLFDSERAGVITLKDLRKVAKELGET), and 148–183 (MDDSELQEMIDRADSDGDAQVTFEDFYNIMTKKTFA). Ca(2+)-binding residues include D52, D54, T56, S58, E63, D88, D90, S92, Q94, and E99.

It belongs to the centrin family. Monomer.

The protein localises to the cytoplasm. Its subcellular location is the cytoskeleton. Its function is as follows. Plays a fundamental role in microtubule organizing center structure and function. Component of the infraciliary lattice (ICL) and the ciliary basal bodies. The sequence is that of Caltractin ICL1c (Icl1c) from Paramecium tetraurelia.